Consider the following 107-residue polypeptide: MDVIVKMLILRKFVEQGNVCPIHLCVDIYKRAFPRSVNKGRSSYARRRRALELGRCHRCYRVYPPLFPEISRCDNRTCVPGISYNSKVRDYILWGVTEVIPHPGYNF.

The segment at 46-49 is basic; the sequence is RRRR. The segment at 56–78 adopts a C4-type zinc-finger fold; the sequence is CHRCYRVYPPLFPEISRCDNRTC.

It belongs to the carlaviruses nucleic acid-binding protein family.

Functionally, suppressor of viral-induced RNA silencing. The potential mechanism of action is based on sequestering siRNAs. The chain is RNA silencing suppressor from Chrysanthemum morifolium (Florist's daisy).